Reading from the N-terminus, the 448-residue chain is Signal recognition particle protein (448 aa).

GTP contacts are provided by residues 101-108 (GLQGSGKT), 182-186 (DSAGR), and 240-243 (SKFD).

It belongs to the GTP-binding SRP family. SRP54 subfamily. Part of the signal recognition particle protein translocation system, which is composed of SRP and FtsY. SRP is a ribonucleoprotein composed of Ffh and a 4.5S RNA molecule.

It is found in the cytoplasm. It carries out the reaction GTP + H2O = GDP + phosphate + H(+). Involved in targeting and insertion of nascent membrane proteins into the cytoplasmic membrane. Binds to the hydrophobic signal sequence of the ribosome-nascent chain (RNC) as it emerges from the ribosomes. The SRP-RNC complex is then targeted to the cytoplasmic membrane where it interacts with the SRP receptor FtsY. Interaction with FtsY leads to the transfer of the RNC complex to the Sec translocase for insertion into the membrane, the hydrolysis of GTP by both Ffh and FtsY, and the dissociation of the SRP-FtsY complex into the individual components. The sequence is that of Signal recognition particle protein from Helicobacter pylori (strain ATCC 700392 / 26695) (Campylobacter pylori).